A 142-amino-acid chain; its full sequence is Large ribosomal subunit protein uL13 (142 aa).

It belongs to the universal ribosomal protein uL13 family. Part of the 50S ribosomal subunit.

Its function is as follows. This protein is one of the early assembly proteins of the 50S ribosomal subunit, although it is not seen to bind rRNA by itself. It is important during the early stages of 50S assembly. This chain is Large ribosomal subunit protein uL13, found in Ectopseudomonas mendocina (strain ymp) (Pseudomonas mendocina).